Reading from the N-terminus, the 420-residue chain is Tyrosine--tRNA ligase (420 aa).

Position 36 (Tyr-36) interacts with L-tyrosine. The 'HIGH' region motif lies at 41–50 (PTADSMHIGH). L-tyrosine is bound by residues Tyr-170 and Gln-174. Positions 231–235 (KFGKS) match the 'KMSKS' region motif. Lys-234 contacts ATP. An S4 RNA-binding domain is found at 353 to 420 (TNIVDFIVEA…KKKYFMVKYK (68 aa)).

Belongs to the class-I aminoacyl-tRNA synthetase family. TyrS type 1 subfamily. As to quaternary structure, homodimer.

The protein resides in the cytoplasm. It catalyses the reaction tRNA(Tyr) + L-tyrosine + ATP = L-tyrosyl-tRNA(Tyr) + AMP + diphosphate + H(+). Functionally, catalyzes the attachment of tyrosine to tRNA(Tyr) in a two-step reaction: tyrosine is first activated by ATP to form Tyr-AMP and then transferred to the acceptor end of tRNA(Tyr). The sequence is that of Tyrosine--tRNA ligase from Staphylococcus carnosus (strain TM300).